Reading from the N-terminus, the 634-residue chain is MSFLLLTPPPCLLIPPPPLSHRRSSSLFLKHPFQPSPRPLSFCKPSALRLRANTTVNSLKALETIKPYLQSESKTVLLGWLCSCVSVVSLSQIVPRLGSFTSNLNANAASLTKLKGECLVLAGLVLAKVVAYYLQQAFLWEAALNTVYKIRVFAYRRVLERELEFFEGGNGISSGDIAYRITAEASEVADTIYALLNTVVPSAIQISVMTAHMIVASPALTLVSAMVIPSVALLIAYLGDRLRKISRKAQIASAQLSTYLNEVLPAILFVKANNAEISESVRFQRFARADLDERFKKKKMKSLIPQIVQVMYLGSLSIFCVGAVILAGSSLSSSAIVSFVASLAFLIDPVQDLGKAYNELKQGEPAIERLFDLTSLESKVIERPEAIQLEKVAGEVELCDISFKYDENMLPVLDGLNLHIKAGETVALVGPSGGGKTTLIKLLLRLYEPSSGSIIIDKIDIKDIKLESLRKHVGLVSQDTTLFSGTIADNIGYRDLTTGIDMKRVELAAKTANADEFIRNLPEGYNTGVGPRGSSLSGGQKQRLAIARALYQKSSILILDEATSALDSLSELLVREALERVMQDHTVIVIAHRLETVMMAQRVFLVERGKLKELNRSSLLSTHKDSLTSAGLVI.

The N-terminal 51 residues, 1-51 (MSFLLLTPPPCLLIPPPPLSHRRSSSLFLKHPFQPSPRPLSFCKPSALRLR), are a transit peptide targeting the chloroplast. Transmembrane regions (helical) follow at residues 75–95 (TVLL…QIVP), 119–139 (LVLA…QAFL), 195–215 (LLNT…HMIV), 219–239 (ALTL…AYLG), 307–327 (IVQV…VILA), and 330–350 (SLSS…IDPV). An ABC transmembrane type-1 domain is found at 77-362 (LLGWLCSCVS…LGKAYNELKQ (286 aa)). Positions 396-633 (VELCDISFKY…KDSLTSAGLV (238 aa)) constitute an ABC transporter domain. 430 to 437 (GPSGGGKT) is a binding site for ATP.

The protein belongs to the ABC transporter superfamily. ABCB family. Multidrug resistance exporter (TC 3.A.1.201) subfamily.

It localises to the plastid. The protein localises to the chloroplast membrane. This Arabidopsis thaliana (Mouse-ear cress) protein is ABC transporter B family member 29, chloroplastic (ABCB29).